Reading from the N-terminus, the 160-residue chain is Putative NrdI-like protein (160 aa).

It belongs to the NrdI family.

This Streptococcus pyogenes serotype M6 (strain ATCC BAA-946 / MGAS10394) protein is Putative NrdI-like protein.